The primary structure comprises 556 residues: MSVSAFNRRWAAVILEALTRHGVRHICIAPGSRSTPLTLAAAENSAFIHHTHFDERGLGHLALGLAKVSKQPVAVIVTSGTAVANLYPALIEAGLTGEKLILLTADRPPELIDCGANQAIRQPGMFASHPTHSISLPRPTQDIPARWLVSTIDHALGTLHAGGVHINCPFAEPLYGEMDDTGISWQQRLGDWWQDDKPWLREAPRRESEKQRDWFFWRQKRGVVVAGRMSAEEGKKVALWAQTLGWPLIGDVLSQTGQPLPCADLWLGNAKATSELQQAQIVVQLGSSLTGKRLLQWQASCEPEEYWIVDDIEGRLDPAHHRGRRLIANIADWLELHPAEKRQPWCVEIPRLAEQAMQAVIARRDAFGEAQLAHRISDYLPEQGQLFVGNSLVVRLIDALSQLPAGYPVYSNRGASGIDGLLSTAAGVQRASGKPTLAIVGDLSALYDLNALALLRQVSAPLVLIVVNNNGGQIFSLLPTPKSERERFYLMPQNVHFEHAAAMFELKYHRPQNWQELETTLVDAWRTPTTTVIEMVVNDTDGAQTLQQLLAQVSHL.

The protein belongs to the TPP enzyme family. MenD subfamily. As to quaternary structure, homodimer. Mg(2+) is required as a cofactor. It depends on Mn(2+) as a cofactor. Requires thiamine diphosphate as cofactor.

It catalyses the reaction isochorismate + 2-oxoglutarate + H(+) = 5-enolpyruvoyl-6-hydroxy-2-succinyl-cyclohex-3-ene-1-carboxylate + CO2. It participates in quinol/quinone metabolism; 1,4-dihydroxy-2-naphthoate biosynthesis; 1,4-dihydroxy-2-naphthoate from chorismate: step 2/7. Its pathway is quinol/quinone metabolism; menaquinone biosynthesis. Catalyzes the thiamine diphosphate-dependent decarboxylation of 2-oxoglutarate and the subsequent addition of the resulting succinic semialdehyde-thiamine pyrophosphate anion to isochorismate to yield 2-succinyl-5-enolpyruvyl-6-hydroxy-3-cyclohexene-1-carboxylate (SEPHCHC). The sequence is that of 2-succinyl-5-enolpyruvyl-6-hydroxy-3-cyclohexene-1-carboxylate synthase from Escherichia coli O45:K1 (strain S88 / ExPEC).